The following is a 345-amino-acid chain: Platelet-derived growth factor C (345 aa).

The N-terminal stretch at Met-1–Ala-22 is a signal peptide. Polar residues predominate over residues Ser-24–Ser-33. The disordered stretch occupies residues Ser-24–Arg-45. Asn-25 carries N-linked (GlcNAc...) asparagine glycosylation. A compositionally biased stretch (basic and acidic residues) spans Ser-34–Arg-45. Residues His-46–Ile-163 enclose the CUB domain. N-linked (GlcNAc...) asparagine glycosylation is present at Asn-55. Disulfide bonds link Cys-104/Cys-124, Cys-250/Cys-294, Cys-280/Cys-335, and Cys-287/Cys-337.

It belongs to the PDGF/VEGF growth factor family. In terms of assembly, homodimer; disulfide-linked. Interacts with PDGFRA homodimers, and with heterodimers formed by PDGFRA and PDGFRB. Interacts (via CUB domain) with PLAT (via kringle domain). Post-translationally, proteolytic removal of the N-terminal CUB domain releasing the core domain is necessary for unmasking the receptor-binding epitopes of the core domain. Cleavage after basic residues in the hinge region (region connecting the CUB and growth factor domains) gives rise to the receptor-binding form. Cleaved by PLAT and PLG. Sumoylated with SUMO1. In terms of processing, N-glycosylated. As to expression, highly expressed in the kidney and adrenal gland. In the kidney, it is expressed in arteriolar smooth muscle cells and in epithelial cells of individual segments (at protein level).

It is found in the cytoplasm. The protein resides in the cytosol. The protein localises to the secreted. It localises to the nucleus. Its subcellular location is the cytoplasmic granule. It is found in the cell membrane. In terms of biological role, growth factor that plays an essential role in the regulation of embryonic development, cell proliferation, cell migration, survival and chemotaxis. Potent mitogen and chemoattractant for cells of mesenchymal origin. Required for normal skeleton formation during embryonic development, especially for normal development of the craniofacial skeleton and for normal development of the palate. Required for normal skin morphogenesis during embryonic development. Plays an important role in wound healing, where it appears to be involved in three stages: inflammation, proliferation and remodeling. Plays an important role in angiogenesis and blood vessel development. Involved in fibrotic processes, in which transformation of interstitial fibroblasts into myofibroblasts plus collagen deposition occurs. The CUB domain has mitogenic activity in coronary artery smooth muscle cells, suggesting a role beyond the maintenance of the latency of the PDGF domain. In the nucleus, PDGFC seems to have additional function. In Rattus norvegicus (Rat), this protein is Platelet-derived growth factor C (Pdgfc).